Consider the following 170-residue polypeptide: CASP-like protein 2D1 (170 aa).

Residues 1 to 4 (MLKL) are Cytoplasmic-facing. Residues 5-25 (LDFSLRLSVIPLSVATIWLTV) form a helical membrane-spanning segment. Topologically, residues 26–47 (TNKQDNSIYGYLKYSDLTGLKY) are extracellular. Residues 48–68 (MVFISGICASYAFIAAVSTWI) form a helical membrane-spanning segment. At 69 to 83 (RCIVTKTWLFFVSDQ) the chain is on the cytoplasmic side. A helical transmembrane segment spans residues 84–104 (IVAYLMVTSGTAVLEILYLAY). Residues 105–127 (NGDREVSWSEACTSYGKFCYRMK) are Extracellular-facing. A helical membrane pass occupies residues 128 to 148 (LAVILHALALSCFIILAVISA). At 149–170 (YRAFSIFEPPLVPSKVVEEDRA) the chain is on the cytoplasmic side.

The protein belongs to the Casparian strip membrane proteins (CASP) family. As to quaternary structure, homodimer and heterodimers.

The protein resides in the cell membrane. The sequence is that of CASP-like protein 2D1 from Populus trichocarpa (Western balsam poplar).